We begin with the raw amino-acid sequence, 331 residues long: Laforin (331 aa).

The CBM20 domain maps to 1–124; the sequence is MRFRFGVVVP…NNLVDGVYCL (124 aa). S25 carries the post-translational modification Phosphoserine; by AMPK. Residues W32, K87, 103-107, D197, D235, and R241 contribute to the substrate site; that span reads GPHHD. A Tyrosine-protein phosphatase domain is found at 156–323; sequence HYSRILPNIW…EEDFFQKFGK (168 aa). C266 (phosphocysteine intermediate) is an active-site residue. Residues 266 to 272 carry the Glucan phosphatase signature motif CXAGXGR motif; the sequence is CNAGVGR. Residues 267 to 272 and Y304 contribute to the substrate site; that span reads NAGVGR.

Belongs to the protein-tyrosine phosphatase family. As to quaternary structure, homodimer. Interacts with itself. Interacts with PPP1R3B, PPP1R3C, PPP1R3D, HIRIP5, and EPM2AIP1. Binds glycogen and Lafora bodies. Interacts with NHLRC1/malin (via the NHL repeats). Forms a complex with NHLRC1/malin and HSP70. Interacts with PPP1R3D; in the presence of NHLC1/malin the interaction leads to ubiquitination and autophagic degradation of PPP1R3D. Interacts (via the phosphatase domain) with MAPT/Tau; the interaction dephosphorylates MAPT. Interacts with PRDM8. Polyubiquitinated by NHLRC1/malin. Post-translationally, phosphorylation on Ser-25 by AMPK affects the phosphatase activity of the enzyme and its ability to homodimerize and interact with NHLRC1, PPP1R3C or PRKAA2.

It is found in the cytoplasm. It localises to the endoplasmic reticulum membrane. The protein localises to the cell membrane. It catalyses the reaction O-phospho-L-tyrosyl-[protein] + H2O = L-tyrosyl-[protein] + phosphate. The catalysed reaction is O-phospho-L-seryl-[protein] + H2O = L-seryl-[protein] + phosphate. The enzyme catalyses O-phospho-L-threonyl-[protein] + H2O = L-threonyl-[protein] + phosphate. Functionally, plays an important role in preventing glycogen hyperphosphorylation and the formation of insoluble aggregates, via its activity as glycogen phosphatase, and by promoting the ubiquitination of proteins involved in glycogen metabolism via its interaction with the E3 ubiquitin ligase NHLRC1/malin. Dephosphorylates phosphotyrosine and synthetic substrates, such as para-nitrophenylphosphate (pNPP), and has low activity with phosphoserine and phosphothreonine substrates (in vitro). Has also been shown to dephosphorylate MAPT. Shows strong phosphatase activity towards complex carbohydrates in vitro, avoiding glycogen hyperphosphorylation which is associated with reduced branching and formation of insoluble aggregates. Forms a complex with NHLRC1/malin and HSP70, which suppresses the cellular toxicity of misfolded proteins by promoting their degradation through the ubiquitin-proteasome system (UPS). Acts as a scaffold protein to facilitate PPP1R3C/PTG ubiquitination by NHLRC1/malin. Also promotes proteasome-independent protein degradation through the macroautophagy pathway. In Canis lupus familiaris (Dog), this protein is Laforin (EPM2A).